The following is a 450-amino-acid chain: Bifunctional apoptosis regulator (450 aa).

The tract at residues M1–L20 is disordered. Topologically, residues M1–M140 are cytoplasmic. Residues C34–R74 form an RING-type zinc finger. Residues G141–V161 form a helical membrane-spanning segment. The Lumenal portion of the chain corresponds to Y162 to E331. Positions W182 to L249 constitute an SAM domain. N232 is a glycosylation site (N-linked (GlcNAc...) asparagine). A helical membrane pass occupies residues F332 to L352. At E353–R360 the chain is on the cytoplasmic side. The helical transmembrane segment at F361–W381 threads the bilayer. At S382–G404 the chain is on the lumenal side. Residues L405–W425 form a helical membrane-spanning segment. Over A426–L450 the chain is Cytoplasmic.

Interacts with CASP8, BCL2 and BCL2L1 through SAM domain and also with HIP1, IFT57, ESRRBL1 and BCAP31. Interacts with NGFR; this interaction inhibits NF-kappa-B and JNK-related signaling pathways. Mediates RING-dependent self-ubiquitination leading to proteasomal degradation. In terms of tissue distribution, expressed highly in brain, moderately in small intestine, weakly in testes and only faintly in liver and skeletal muscle. Not expressed in heart, kidney, lung and spleen.

It is found in the endoplasmic reticulum membrane. It carries out the reaction S-ubiquitinyl-[E2 ubiquitin-conjugating enzyme]-L-cysteine + [acceptor protein]-L-lysine = [E2 ubiquitin-conjugating enzyme]-L-cysteine + N(6)-ubiquitinyl-[acceptor protein]-L-lysine.. Membrane-bound E3 ubiquitin ligase that plays a role in several processes including apoptosis regulation or reticulum endoplasmic stress. Has anti-apoptotic activity, both for apoptosis triggered via death-receptors and via mitochondrial factors. Contributes to the dynamic control of IRE1/ERN1 signaling during ER stress by inducing BAX inhibitor 1/TMBIM6 proteasomal degradation. Promotes the activation of TGF-beta signaling by mediating the 'Lys-63'-linked ubiquitination of TGFBR1 which is critical to activate the pathway. Together with NGFR, negatively regulates NF-kappa-B and JNK-related signaling pathways. Promotes the proteasome-mediated degradation of PNPLA3, a protein involveld in lipid metabolism. In Homo sapiens (Human), this protein is Bifunctional apoptosis regulator (BFAR).